Consider the following 582-residue polypeptide: Eukaryotic translation initiation factor 2A (582 aa).

WD repeat units follow at residues 21 to 63, 73 to 124, 273 to 314, and 358 to 402; these read GPPK…NIVN, LDLP…NVKS, PKNG…IFDF, and TASD…LHKY. A disordered region spans residues 436-533; it reads DLPTQESKPA…NTGDPETDKK (98 aa). Residues 482–580 adopt a coiled-coil conformation; the sequence is SKTALKNQKK…LLKELEDLEI (99 aa). The span at 495–506 shows a compositional bias: basic and acidic residues; the sequence is KKAAKQESKMDE. Residues 510–522 show a composition bias toward polar residues; the sequence is SDSTNVQNNTPVA.

It belongs to the WD repeat EIF2A family.

Functionally, functions in the early steps of protein synthesis of a small number of specific mRNAs. Acts by directing the binding of methionyl-tRNAi to 40S ribosomal subunits. In contrast to the eIF-2 complex, it binds methionyl-tRNAi to 40S subunits in a codon-dependent manner, whereas the eIF-2 complex binds methionyl-tRNAi to 40S subunits in a GTP-dependent manner. In Xenopus laevis (African clawed frog), this protein is Eukaryotic translation initiation factor 2A (eif2a).